A 923-amino-acid chain; its full sequence is Glucosidase 2 subunit alpha (923 aa).

The signal sequence occupies residues 1–25; sequence MRYHGICWFIFQAAIIFAIFGSCQG. Asparagine 262 carries N-linked (GlcNAc...) asparagine glycosylation. Aspartate 524 acts as the Nucleophile in catalysis. The active site involves glutamate 527. The N-linked (GlcNAc...) asparagine glycan is linked to asparagine 563. Aspartate 600 functions as the Proton donor in the catalytic mechanism. Asparagine 822 is a glycosylation site (N-linked (GlcNAc...) asparagine).

This sequence belongs to the glycosyl hydrolase 31 family. As to quaternary structure, heterodimer of a catalytic subunit alpha (gls2) and a subunit beta (gtb1).

It localises to the endoplasmic reticulum. It carries out the reaction N(4)-(alpha-D-Glc-(1-&gt;3)-alpha-D-Man-(1-&gt;2)-alpha-D-Man-(1-&gt;2)-alpha-D-Man-(1-&gt;3)-[alpha-D-Man-(1-&gt;2)-alpha-D-Man-(1-&gt;3)-[alpha-D-Man-(1-&gt;2)-alpha-D-Man-(1-&gt;6)]-alpha-D-Man-(1-&gt;6)]-beta-D-Man-(1-&gt;4)-beta-D-GlcNAc-(1-&gt;4)-beta-D-GlcNAc)-L-asparaginyl-[protein] + H2O = N(4)-(alpha-D-Man-(1-&gt;2)-alpha-D-Man-(1-&gt;2)-alpha-D-Man-(1-&gt;3)-[alpha-D-Man-(1-&gt;2)-alpha-D-Man-(1-&gt;3)-[alpha-D-Man-(1-&gt;2)-alpha-D-Man-(1-&gt;6)]-alpha-D-Man-(1-&gt;6)]-beta-D-Man-(1-&gt;4)-beta-D-GlcNAc-(1-&gt;4)-beta-D-GlcNAc)-L-asparaginyl-[protein] (N-glucan mannose isomer 9A1,2,3B1,2,3) + beta-D-glucose. The catalysed reaction is N(4)-(alpha-D-Glc-(1-&gt;3)-alpha-D-Glc-(1-&gt;3)-alpha-D-Man-(1-&gt;2)-alpha-D-Man-(1-&gt;2)-alpha-D-Man-(1-&gt;3)-[alpha-D-Man-(1-&gt;2)-alpha-D-Man-(1-&gt;3)-[alpha-D-Man-(1-&gt;2)-alpha-D-Man-(1-&gt;6)]-alpha-D-Man-(1-&gt;6)]-beta-D-Man-(1-&gt;4)-beta-D-GlcNAc-(1-&gt;4)-beta-D-GlcNAc)-L-asparaginyl-[protein] + H2O = N(4)-(alpha-D-Glc-(1-&gt;3)-alpha-D-Man-(1-&gt;2)-alpha-D-Man-(1-&gt;2)-alpha-D-Man-(1-&gt;3)-[alpha-D-Man-(1-&gt;2)-alpha-D-Man-(1-&gt;3)-[alpha-D-Man-(1-&gt;2)-alpha-D-Man-(1-&gt;6)]-alpha-D-Man-(1-&gt;6)]-beta-D-Man-(1-&gt;4)-beta-D-GlcNAc-(1-&gt;4)-beta-D-GlcNAc)-L-asparaginyl-[protein] + beta-D-glucose. It participates in glycan metabolism; N-glycan metabolism. Catalytic subunit of glucosidase 2, which cleaves sequentially the 2 innermost alpha-1,3-linked glucose residues from the Glc(2)Man(9)GlcNAc(2) oligosaccharide precursor of immature glycoproteins. This chain is Glucosidase 2 subunit alpha, found in Schizosaccharomyces pombe (strain 972 / ATCC 24843) (Fission yeast).